Here is a 65-residue protein sequence, read N- to C-terminus: Large ribosomal subunit protein bL35 (65 aa).

This sequence belongs to the bacterial ribosomal protein bL35 family.

The chain is Large ribosomal subunit protein bL35 from Pectobacterium atrosepticum (strain SCRI 1043 / ATCC BAA-672) (Erwinia carotovora subsp. atroseptica).